The sequence spans 249 residues: Proteasome subunit alpha type-7 (249 aa).

The protein belongs to the peptidase T1A family. The 26S proteasome consists of a 20S proteasome core and two 19S regulatory subunits. The 20S proteasome core is composed of 28 subunits that are arranged in four stacked rings, resulting in a barrel-shaped structure. The two end rings are each formed by seven alpha subunits, and the two central rings are each formed by seven beta subunits. The catalytic chamber with the active sites is on the inside of the barrel.

The protein resides in the cytoplasm. It localises to the nucleus. Its function is as follows. The proteasome is a multicatalytic proteinase complex which is characterized by its ability to cleave peptides with Arg, Phe, Tyr, Leu, and Glu adjacent to the leaving group at neutral or slightly basic pH. The proteasome has an ATP-dependent proteolytic activity. In Cicer arietinum (Chickpea), this protein is Proteasome subunit alpha type-7 (PAD1).